Here is a 262-residue protein sequence, read N- to C-terminus: Hemin import ATP-binding protein HmuV (262 aa).

The ABC transporter domain occupies 3 to 244 (LQARNLTLAR…DHMRRVYGIE (242 aa)). Position 35–42 (35–42 (GANGAGKS)) interacts with ATP.

This sequence belongs to the ABC transporter superfamily. Heme (hemin) importer (TC 3.A.1.14.5) family. As to quaternary structure, the complex is composed of two ATP-binding proteins (HmuV), two transmembrane proteins (HmuU) and a solute-binding protein (HmuT).

It localises to the cell inner membrane. In terms of biological role, part of the ABC transporter complex HmuTUV involved in hemin import. Responsible for energy coupling to the transport system. The chain is Hemin import ATP-binding protein HmuV from Bordetella bronchiseptica (strain ATCC BAA-588 / NCTC 13252 / RB50) (Alcaligenes bronchisepticus).